A 112-amino-acid chain; its full sequence is Photosystem II reaction center Psb28 protein (112 aa).

Belongs to the Psb28 family. As to quaternary structure, part of the photosystem II complex.

The protein resides in the cellular thylakoid membrane. The chain is Photosystem II reaction center Psb28 protein from Synechocystis sp. (strain ATCC 27184 / PCC 6803 / Kazusa).